Reading from the N-terminus, the 792-residue chain is MEPEINCSEFCDSFPGQELDRRPLHDLCKTTITDSQHGSADISPLSPALLGVIWTFLSCGLLLVLFFLAFTIRCRKNRIVKMSSPNLNIVTLLGSCLTYSSAYLFGIQDALVGSSVEALIQTRLSLLCIGTTLVFGPILGKSWRLYKVFTQRVPDKRVIIKDLQLLGLVAALVVADVILLVTWVLTDPIQCLQILGVSMKVTGRDVSCSLTNTHFCASRYSDVWIALVLGCKGLLLLYGAYLAGLTNHVSSPPVNQSLTIMVGVNLLLLTAGLLFVVTRYLHSWPNLVFGLTSGGIFVCTTTVNCCVFLPQLRQRKAFEGENQTIRHMAKYFSTPSKTFRSKFDEDQSCHLRDEXSCMERLLTEKNAVIESLQEQVSNAKEKLVKLMSAECALDSPEWAVPAAASAGGPAECXATSEKESGAAAEDSLPASAASQHMQGPGASRRDXSPSPDQKYDMPLKQFCDHLDMGCSQKPKAEQSEGPERGNQEPMAPGQSLMTDGVACEPHRPRQNSEVLPERLPRVSSVVREKLQEVLQELDLGTEAPLSPLPCPQQPWKSNTSGSPQKLSPSKLGFSPYVVRRRRAAQRARSRIPGSVGLKMGHQANNTVSGSQNGLIVQNRDSPRLDHHNARSKEPRSSSVKPSPISAPHQRRGSLEGSKQCETEPQEARGYSVAFPRQPSASAPAQSSTAPCLSSXPALPRQRQPLPLLSPGCPSLSSGCYNLDSESSSSDEFFCRCHRPYCEICFQSSLDSNDSDTSDSDLEQTSGLASWEKLLARSKPVVNFKDDLKPTLV.

Residues 1–49 lie on the Extracellular side of the membrane; it reads MEPEINCSEFCDSFPGQELDRRPLHDLCKTTITDSQHGSADISPLSPAL. A glycan (N-linked (GlcNAc...) asparagine) is linked at Asn-6. The helical transmembrane segment at 50–70 threads the bilayer; that stretch reads LGVIWTFLSCGLLLVLFFLAF. The Cytoplasmic portion of the chain corresponds to 71-86; that stretch reads TIRCRKNRIVKMSSPN. Residues 87-107 form a helical membrane-spanning segment; that stretch reads LNIVTLLGSCLTYSSAYLFGI. Over 108–118 the chain is Extracellular; the sequence is QDALVGSSVEA. The chain crosses the membrane as a helical span at residues 119–139; the sequence is LIQTRLSLLCIGTTLVFGPIL. Residues 140 to 164 lie on the Cytoplasmic side of the membrane; it reads GKSWRLYKVFTQRVPDKRVIIKDLQ. Residues 165-185 form a helical membrane-spanning segment; that stretch reads LLGLVAALVVADVILLVTWVL. Residues 186–222 lie on the Extracellular side of the membrane; sequence TDPIQCLQILGVSMKVTGRDVSCSLTNTHFCASRYSD. A helical membrane pass occupies residues 223–243; the sequence is VWIALVLGCKGLLLLYGAYLA. The Cytoplasmic portion of the chain corresponds to 244–257; it reads GLTNHVSSPPVNQS. A helical transmembrane segment spans residues 258 to 278; the sequence is LTIMVGVNLLLLTAGLLFVVT. The Extracellular portion of the chain corresponds to 279 to 287; sequence RYLHSWPNL. A helical membrane pass occupies residues 288 to 308; the sequence is VFGLTSGGIFVCTTTVNCCVF. Topologically, residues 309-792 are cytoplasmic; that stretch reads LPQLRQRKAF…FKDDLKPTLV (484 aa). Residues 354–390 are a coiled coil; it reads EXSCMERLLTEKNAVIESLQEQVSNAKEKLVKLMSAE. 3 disordered regions span residues 407–457, 469–516, and 538–704; these read GGPA…KYDM, GCSQ…EVLP, and DLGT…QRQP. The span at 422 to 434 shows a compositional bias: low complexity; it reads AAAEDSLPASAAS. Composition is skewed to basic and acidic residues over residues 443-457 and 474-486; these read SRRD…KYDM and PKAE…ERGN. Residues 554–567 are compositionally biased toward polar residues; the sequence is PWKSNTSGSPQKLS. The segment covering 578-589 has biased composition (basic residues); sequence VRRRRAAQRARS. Positions 602–619 are enriched in polar residues; sequence QANNTVSGSQNGLIVQNR. Positions 620–635 are enriched in basic and acidic residues; that stretch reads DSPRLDHHNARSKEPR. Positions 675–704 are enriched in low complexity; that stretch reads PRQPSASAPAQSSTAPCLSSXPALPRQRQP.

The protein belongs to the G-protein coupled receptor 3 family. GABA-B receptor subfamily. Widely expressed throughout the brain and is particularly dense in the olfactory tubercles, islands of Calleja, nucleus accumbens, piriform cortex and all fields of the hippocampus.

The protein localises to the cell membrane. In terms of biological role, orphan G-protein coupled receptor involved in the regulation of hair cell orientation in mechanosensory organs of the inner ear. It is required to trigger a 180 degree reversal in hair cell orientation, creating a virtual line of polarity reversal (LPR) across which stereociliary bundles are arranged in opposite orientations. This Rattus norvegicus (Rat) protein is Probable G-protein coupled receptor 156 (Gpr156).